A 1177-amino-acid chain; its full sequence is DNA-directed RNA polymerase subunit beta (1177 aa).

The tract at residues 1154-1177 (RDTEDDDDHQSADKLNVEVETTKE) is disordered. Basic and acidic residues predominate over residues 1162 to 1177 (HQSADKLNVEVETTKE).

Belongs to the RNA polymerase beta chain family. The RNAP catalytic core consists of 2 alpha, 1 beta, 1 beta' and 1 omega subunit. When a sigma factor is associated with the core the holoenzyme is formed, which can initiate transcription.

The enzyme catalyses RNA(n) + a ribonucleoside 5'-triphosphate = RNA(n+1) + diphosphate. Functionally, DNA-dependent RNA polymerase catalyzes the transcription of DNA into RNA using the four ribonucleoside triphosphates as substrates. This is DNA-directed RNA polymerase subunit beta from Bacillus mycoides (strain KBAB4) (Bacillus weihenstephanensis).